The following is a 357-amino-acid chain: UDP-N-acetylglucosamine--N-acetylmuramyl-(pentapeptide) pyrophosphoryl-undecaprenol N-acetylglucosamine transferase (357 aa).

Residues 13 to 15 (TGG), Asn125, Arg161, Ser189, Ile243, and Gln288 each bind UDP-N-acetyl-alpha-D-glucosamine.

Belongs to the glycosyltransferase 28 family. MurG subfamily.

The protein localises to the cell inner membrane. The enzyme catalyses di-trans,octa-cis-undecaprenyl diphospho-N-acetyl-alpha-D-muramoyl-L-alanyl-D-glutamyl-meso-2,6-diaminopimeloyl-D-alanyl-D-alanine + UDP-N-acetyl-alpha-D-glucosamine = di-trans,octa-cis-undecaprenyl diphospho-[N-acetyl-alpha-D-glucosaminyl-(1-&gt;4)]-N-acetyl-alpha-D-muramoyl-L-alanyl-D-glutamyl-meso-2,6-diaminopimeloyl-D-alanyl-D-alanine + UDP + H(+). The protein operates within cell wall biogenesis; peptidoglycan biosynthesis. In terms of biological role, cell wall formation. Catalyzes the transfer of a GlcNAc subunit on undecaprenyl-pyrophosphoryl-MurNAc-pentapeptide (lipid intermediate I) to form undecaprenyl-pyrophosphoryl-MurNAc-(pentapeptide)GlcNAc (lipid intermediate II). The sequence is that of UDP-N-acetylglucosamine--N-acetylmuramyl-(pentapeptide) pyrophosphoryl-undecaprenol N-acetylglucosamine transferase from Bordetella petrii (strain ATCC BAA-461 / DSM 12804 / CCUG 43448).